The sequence spans 582 residues: Glutaredoxin domain-containing cysteine-rich protein CG12206 (582 aa).

Polar residues predominate over residues 217–227 (CETLDSGTGSD). 2 disordered regions span residues 217–244 (CETLDSGTGSDLENHPQQQQQPQQVRSP) and 260–300 (EADH…SCDS). Positions 291–300 (SSNSSLSCDS) are enriched in low complexity. In terms of domain architecture, Glutaredoxin spans 423–528 (NVKNYMEKDV…QLLRPYKSIA (106 aa)).

It belongs to the GRXCR1 family.

The sequence is that of Glutaredoxin domain-containing cysteine-rich protein CG12206 from Drosophila melanogaster (Fruit fly).